The following is a 152-amino-acid chain: Ribosome maturation factor RimP (152 aa).

It belongs to the RimP family.

It is found in the cytoplasm. Its function is as follows. Required for maturation of 30S ribosomal subunits. This Sodalis glossinidius (strain morsitans) protein is Ribosome maturation factor RimP.